Here is a 653-residue protein sequence, read N- to C-terminus: Fructose-1,6-bisphosphatase class 3 (653 aa).

Belongs to the FBPase class 3 family. The cofactor is Mn(2+).

It carries out the reaction beta-D-fructose 1,6-bisphosphate + H2O = beta-D-fructose 6-phosphate + phosphate. Its pathway is carbohydrate biosynthesis; gluconeogenesis. This chain is Fructose-1,6-bisphosphatase class 3, found in Listeria innocua serovar 6a (strain ATCC BAA-680 / CLIP 11262).